The following is a 264-amino-acid chain: DNA-directed RNA polymerase subunit Rpo3 (264 aa).

C203, C206, and C209 together coordinate [3Fe-4S] cluster.

Belongs to the archaeal Rpo3/eukaryotic RPB3 RNA polymerase subunit family. Part of the RNA polymerase complex. The cofactor is [3Fe-4S] cluster.

Its subcellular location is the cytoplasm. The catalysed reaction is RNA(n) + a ribonucleoside 5'-triphosphate = RNA(n+1) + diphosphate. Its function is as follows. DNA-dependent RNA polymerase (RNAP) catalyzes the transcription of DNA into RNA using the four ribonucleoside triphosphates as substrates. This Methanothermobacter thermautotrophicus (strain ATCC 29096 / DSM 1053 / JCM 10044 / NBRC 100330 / Delta H) (Methanobacterium thermoautotrophicum) protein is DNA-directed RNA polymerase subunit Rpo3.